The chain runs to 1603 residues: DNA polymerase theta (1603 aa).

Positions 38–208 (EARQFEDQHL…WLDGAKVFEA (171 aa)) constitute a Helicase ATP-binding domain. Residue 51–58 (APTSAGKS) coordinates ATP. The DEAH box signature appears at 149 to 152 (DEMH). The region spanning 283 to 434 (TDSSLLEILK…GVLTRKRDAE (152 aa)) is the Helicase C-terminal domain.

This sequence belongs to the DNA polymerase type-A family.

Its subcellular location is the nucleus. The catalysed reaction is DNA(n) + a 2'-deoxyribonucleoside 5'-triphosphate = DNA(n+1) + diphosphate. Its function is as follows. DNA polymerase that promotes microhomology-mediated end-joining (MMEJ), an alternative non-homologous end-joining (NHEJ) machinery triggered in response to double-strand breaks in DNA. MMEJ is an error-prone repair pathway that produces deletions of sequences from the strand being repaired and promotes genomic rearrangements, such as telomere fusions. Required to prevent extensive loss of sequences near G-quadruplex (G4) DNA sites, which are prone to cause genome alterations, by generating deletions. The sequence is that of DNA polymerase theta from Caenorhabditis elegans.